Here is a 428-residue protein sequence, read N- to C-terminus: 3-phosphoshikimate 1-carboxyvinyltransferase (428 aa).

Residues Lys-22, Ser-23, and Arg-27 each coordinate 3-phosphoshikimate. Residue Lys-22 participates in phosphoenolpyruvate binding. Residues Gly-94 and Arg-122 each coordinate phosphoenolpyruvate. Ser-167, Gln-169, Asp-314, and Lys-341 together coordinate 3-phosphoshikimate. Residue Gln-169 coordinates phosphoenolpyruvate. Asp-314 serves as the catalytic Proton acceptor. Residues Arg-345 and Arg-387 each coordinate phosphoenolpyruvate.

Belongs to the EPSP synthase family. As to quaternary structure, monomer.

Its subcellular location is the cytoplasm. The catalysed reaction is 3-phosphoshikimate + phosphoenolpyruvate = 5-O-(1-carboxyvinyl)-3-phosphoshikimate + phosphate. It participates in metabolic intermediate biosynthesis; chorismate biosynthesis; chorismate from D-erythrose 4-phosphate and phosphoenolpyruvate: step 6/7. In terms of biological role, catalyzes the transfer of the enolpyruvyl moiety of phosphoenolpyruvate (PEP) to the 5-hydroxyl of shikimate-3-phosphate (S3P) to produce enolpyruvyl shikimate-3-phosphate and inorganic phosphate. This chain is 3-phosphoshikimate 1-carboxyvinyltransferase, found in Geotalea uraniireducens (strain Rf4) (Geobacter uraniireducens).